The following is a 665-amino-acid chain: FAD-dependent oxidoreductase domain-containing protein 2 (665 aa).

The signal sequence occupies residues 1–17 (MGPSGLLVALALHLAVC). N136 is a glycosylation site (N-linked (GlcNAc...) asparagine). Positions 642 to 665 (RWLGDHSTAPEPLTQSLDSNKEEL) are disordered. Positions 662-665 (KEEL) match the Prevents secretion from ER motif.

It belongs to the FOXRED2 family. As to quaternary structure, interacts with SEL1L. May interact with OS9 and DNAJC10. Interacts with TXNDC16. FAD serves as cofactor. Post-translationally, N-glycosylated.

It localises to the endoplasmic reticulum lumen. In terms of biological role, probable flavoprotein which may function in endoplasmic reticulum associated degradation (ERAD). May bind non-native proteins in the endoplasmic reticulum and target them to the ubiquitination machinery for subsequent degradation. The polypeptide is FAD-dependent oxidoreductase domain-containing protein 2 (Mus musculus (Mouse)).